The primary structure comprises 109 residues: Nucleoid-associated protein VS_0917 (109 aa).

2 disordered regions span residues 1 to 22 (MFGK…ERMQ) and 88 to 109 (QKEK…KMPF). Residues 9-18 (NMMKQAQQMQ) show a composition bias toward low complexity.

The protein belongs to the YbaB/EbfC family. In terms of assembly, homodimer.

The protein resides in the cytoplasm. It is found in the nucleoid. Its function is as follows. Binds to DNA and alters its conformation. May be involved in regulation of gene expression, nucleoid organization and DNA protection. This is Nucleoid-associated protein VS_0917 from Vibrio atlanticus (strain LGP32) (Vibrio splendidus (strain Mel32)).